Reading from the N-terminus, the 154-residue chain is Fimbrial protein (154 aa).

A propeptide spans 1–6 (leader sequence); it reads MKAQKG. Phe7 carries the post-translational modification N-methylphenylalanine. Residues 7 to 27 form a helical membrane-spanning segment; sequence FTLIELMIVVAIIGILAAIAI. Cys133 and Cys151 are oxidised to a cystine. The O-linked (FucNAc...) serine glycan is linked to Ser154.

The protein belongs to the N-Me-Phe pilin family. As to quaternary structure, the pili are polar flexible filaments of about 5.4 nanometers diameter and 2.5 micrometers average length; they consist of only a single polypeptide chain arranged in a helical configuration of five subunits per turn in the assembled pilus. O-glycosylated; glycan consists of 5NbetaOHC47NFmPse(alpha2-4)Xyl(beta1-3)FucNAc in beta1-O linkage to Ser.

The protein resides in the fimbrium. It localises to the membrane. The chain is Fimbrial protein (pilA) from Pseudomonas aeruginosa.